The following is a 228-amino-acid chain: Protein GrpE (228 aa).

Disordered regions lie at residues 1 to 31 (MADE…NRAA) and 209 to 228 (GVSK…EGNG).

This sequence belongs to the GrpE family. As to quaternary structure, homodimer.

The protein resides in the cytoplasm. Its function is as follows. Participates actively in the response to hyperosmotic and heat shock by preventing the aggregation of stress-denatured proteins, in association with DnaK and GrpE. It is the nucleotide exchange factor for DnaK and may function as a thermosensor. Unfolded proteins bind initially to DnaJ; upon interaction with the DnaJ-bound protein, DnaK hydrolyzes its bound ATP, resulting in the formation of a stable complex. GrpE releases ADP from DnaK; ATP binding to DnaK triggers the release of the substrate protein, thus completing the reaction cycle. Several rounds of ATP-dependent interactions between DnaJ, DnaK and GrpE are required for fully efficient folding. The protein is Protein GrpE of Brucella anthropi (strain ATCC 49188 / DSM 6882 / CCUG 24695 / JCM 21032 / LMG 3331 / NBRC 15819 / NCTC 12168 / Alc 37) (Ochrobactrum anthropi).